Consider the following 129-residue polypeptide: Small ribosomal subunit protein uS11 (129 aa).

Belongs to the universal ribosomal protein uS11 family. As to quaternary structure, part of the 30S ribosomal subunit. Interacts with proteins S7 and S18. Binds to IF-3.

Functionally, located on the platform of the 30S subunit, it bridges several disparate RNA helices of the 16S rRNA. Forms part of the Shine-Dalgarno cleft in the 70S ribosome. The polypeptide is Small ribosomal subunit protein uS11 (Geobacillus sp. (strain WCH70)).